Consider the following 98-residue polypeptide: Tax1-binding protein 3 (98 aa).

Ser2 is modified (N-acetylserine). A PDZ domain is found at 12 to 87 (VVQRVEIHKL…VVRLLVTRQS (76 aa)).

As to quaternary structure, interacts (via its PDZ domain) with GLS2. Interacts (via its PDZ domain) with RTKN (via the C-terminal region); this interaction facilitates Rho-mediated activation of the FOS serum response element (SRE). Interacts (via PDZ domain) with ARHGEF16. Interacts (via PDZ domain) with KCNJ4 (via C-terminus). Competes with LIN7A for KCNJ4 binding. Interacts (via its PDZ domain) with CTNNB1; this interaction inhibits the transcriptional activity of CTNNB1. Interacts with ADGRB2. Detected in kidney distal convoluted tubules (at protein level).

The protein localises to the cytoplasm. It localises to the nucleus. Its subcellular location is the cell membrane. May regulate a number of protein-protein interactions by competing for PDZ domain binding sites. Binds CTNNB1 and may thereby act as an inhibitor of the Wnt signaling pathway. Competes with LIN7A for KCNJ4 binding, and thereby promotes KCNJ4 internalization. May play a role in the Rho signaling pathway. In Rattus norvegicus (Rat), this protein is Tax1-binding protein 3.